The chain runs to 169 residues: S-ribosylhomocysteine lyase (169 aa).

H54, H58, and C128 together coordinate Fe cation.

The protein belongs to the LuxS family. As to quaternary structure, homodimer. The cofactor is Fe cation.

The enzyme catalyses S-(5-deoxy-D-ribos-5-yl)-L-homocysteine = (S)-4,5-dihydroxypentane-2,3-dione + L-homocysteine. In terms of biological role, involved in the synthesis of autoinducer 2 (AI-2) which is secreted by bacteria and is used to communicate both the cell density and the metabolic potential of the environment. The regulation of gene expression in response to changes in cell density is called quorum sensing. Catalyzes the transformation of S-ribosylhomocysteine (RHC) to homocysteine (HC) and 4,5-dihydroxy-2,3-pentadione (DPD). In Tolumonas auensis (strain DSM 9187 / NBRC 110442 / TA 4), this protein is S-ribosylhomocysteine lyase.